Here is a 189-residue protein sequence, read N- to C-terminus: Mediator of RNA polymerase II transcription subunit 28 (189 aa).

Residues 75–115 (YMLIKDENQDLSIEIQRKEALLQKHYNRLEEWKACLSDIQQ) adopt a coiled-coil conformation. Residues 124–147 (PIGSGMLQGPGGGMPPMGGTPPRP) are disordered. Gly residues predominate over residues 129 to 139 (MLQGPGGGMPP).

It belongs to the Mediator complex subunit 28 family. As to quaternary structure, component of the Mediator complex, which includes at least CDK8, MED4, MED6, MED11, MED14, MED17, MED18, MED20, MED21, MED22, MED27, MED28, MED30 and MED31.

It is found in the nucleus. Component of the Mediator complex, a coactivator involved in the regulated transcription of nearly all RNA polymerase II-dependent genes. Mediator functions as a bridge to convey information from gene-specific regulatory proteins to the basal RNA polymerase II transcription machinery. Mediator is recruited to promoters by direct interactions with regulatory proteins and serves as a scaffold for the assembly of a functional preinitiation complex with RNA polymerase II and the general transcription factors. The sequence is that of Mediator of RNA polymerase II transcription subunit 28 (MED28) from Drosophila melanogaster (Fruit fly).